Consider the following 124-residue polypeptide: Small ribosomal subunit protein uS13 (124 aa).

A disordered region spans residues 98-124; sequence VRGQRTRCNARTRKGPRKTVGAKRKEK.

Belongs to the universal ribosomal protein uS13 family. Part of the 30S ribosomal subunit. Forms a loose heterodimer with protein S19. Forms two bridges to the 50S subunit in the 70S ribosome.

In terms of biological role, located at the top of the head of the 30S subunit, it contacts several helices of the 16S rRNA. In the 70S ribosome it contacts the 23S rRNA (bridge B1a) and protein L5 of the 50S subunit (bridge B1b), connecting the 2 subunits; these bridges are implicated in subunit movement. Contacts the tRNAs in the A and P-sites. The chain is Small ribosomal subunit protein uS13 from Dictyoglomus thermophilum (strain ATCC 35947 / DSM 3960 / H-6-12).